The primary structure comprises 370 residues: Dihydroorotate dehydrogenase (quinone) (370 aa).

FMN contacts are provided by residues A80–K84 and T104. K84 contacts substrate. Residue N129–F133 coordinates substrate. FMN is bound by residues N157 and N190. N190 contacts substrate. S193 acts as the Nucleophile in catalysis. Residue N195 participates in substrate binding. The FMN site is built by K226 and T254. A substrate-binding site is contributed by N255–T256. FMN-binding positions include G278, G307, and Y328 to T329.

The protein belongs to the dihydroorotate dehydrogenase family. Type 2 subfamily. Monomer. The cofactor is FMN.

The protein localises to the cell membrane. The enzyme catalyses (S)-dihydroorotate + a quinone = orotate + a quinol. The protein operates within pyrimidine metabolism; UMP biosynthesis via de novo pathway; orotate from (S)-dihydroorotate (quinone route): step 1/1. Functionally, catalyzes the conversion of dihydroorotate to orotate with quinone as electron acceptor. This Mycolicibacterium paratuberculosis (strain ATCC BAA-968 / K-10) (Mycobacterium paratuberculosis) protein is Dihydroorotate dehydrogenase (quinone).